Reading from the N-terminus, the 164-residue chain is R-phycoerythrin alpha chain (164 aa).

Residues N47, K81, C82, R84, H88, R137, C139, and R142 each contribute to the (2R,3E)-phycoerythrobilin site.

The protein belongs to the phycobiliprotein family. As to quaternary structure, heterododecamer of 6 alpha and 6 beta chains. The basic functional unit of phycobiliproteins is a ring-shaped hexamer formed from two back-to-back trimers contacting via the alpha chain subunits. The trimers are composed of alpha/beta subunit heterodimers arranged around a three-fold axis of symmetry. The phycoerythrins also contain a gamma subunit which is located in the center of the hexamer. Post-translationally, contains two covalently linked phycoerythrobilin chromophores.

Its subcellular location is the plastid. It localises to the chloroplast thylakoid membrane. In terms of biological role, light-harvesting photosynthetic tetrapyrrole chromophore-protein from the phycobiliprotein complex. The protein is R-phycoerythrin alpha chain (rpeA) of Agarophyton chilense (Red seaweed).